The chain runs to 99 residues: Acylphosphatase (99 aa).

The Acylphosphatase-like domain occupies 11–97 (ARRIHVKGKV…VVAQGFTQKP (87 aa)). Catalysis depends on residues Arg-26 and Asn-44.

This sequence belongs to the acylphosphatase family.

It carries out the reaction an acyl phosphate + H2O = a carboxylate + phosphate + H(+). The sequence is that of Acylphosphatase (acyP) from Rhizorhabdus wittichii (strain DSM 6014 / CCUG 31198 / JCM 15750 / NBRC 105917 / EY 4224 / RW1) (Sphingomonas wittichii).